Reading from the N-terminus, the 597-residue chain is U3 small nucleolar RNA-associated protein 6 homolog (597 aa).

5 HAT repeats span residues 121–153 (ATKT…WEME), 156–188 (LSSE…MELM), 304–335 (RKEE…FCLE), 488–520 (GGYK…FEKE), and 524–557 (CNMA…EELN).

This sequence belongs to the UTP6 family. Part of the small subunit (SSU) processome, composed of more than 70 proteins and the RNA chaperone small nucleolar RNA (snoRNA) U3.

The protein localises to the nucleus. It localises to the nucleolus. Part of the small subunit (SSU) processome, first precursor of the small eukaryotic ribosomal subunit. During the assembly of the SSU processome in the nucleolus, many ribosome biogenesis factors, an RNA chaperone and ribosomal proteins associate with the nascent pre-rRNA and work in concert to generate RNA folding, modifications, rearrangements and cleavage as well as targeted degradation of pre-ribosomal RNA by the RNA exosome. Involved in nucleolar processing of pre-18S ribosomal RNA. The polypeptide is U3 small nucleolar RNA-associated protein 6 homolog (Homo sapiens (Human)).